The primary structure comprises 140 residues: Probable deoxyuridine 5'-triphosphate nucleotidohydrolase (140 aa).

Substrate is bound by residues Arg-62 to Gly-64, Gly-76 to Asp-79, Arg-130, and Phe-135 to Gly-136.

Belongs to the dUTPase family. As to quaternary structure, homotrimer. It depends on Mg(2+) as a cofactor.

The catalysed reaction is dUTP + H2O = dUMP + diphosphate + H(+). Its pathway is pyrimidine metabolism; dUMP biosynthesis; dUMP from dCTP (dUTP route): step 2/2. Functionally, this enzyme is involved in nucleotide metabolism: it produces dUMP, the immediate precursor of thymidine nucleotides and it decreases the intracellular concentration of dUTP so that uracil cannot be incorporated into DNA. In Schizosaccharomyces pombe (strain 972 / ATCC 24843) (Fission yeast), this protein is Probable deoxyuridine 5'-triphosphate nucleotidohydrolase.